We begin with the raw amino-acid sequence, 375 residues long: 5-amino-6-(D-ribitylamino)uracil--L-tyrosine 4-hydroxyphenyl transferase 1 (375 aa).

The Radical SAM core domain occupies 50-284 (VTYVVNRNIN…AVSRILFHGH (235 aa)). Positions 64, 68, and 71 each coordinate [4Fe-4S] cluster.

Belongs to the radical SAM superfamily. CofH family. In terms of assembly, consists of two subunits, CofG and CofH. It depends on [4Fe-4S] cluster as a cofactor.

The enzyme catalyses 5-amino-6-(D-ribitylamino)uracil + L-tyrosine + S-adenosyl-L-methionine = 5-amino-5-(4-hydroxybenzyl)-6-(D-ribitylimino)-5,6-dihydrouracil + 2-iminoacetate + 5'-deoxyadenosine + L-methionine + H(+). It participates in cofactor biosynthesis; coenzyme F0 biosynthesis. Its function is as follows. Catalyzes the radical-mediated synthesis of 5-amino-5-(4-hydroxybenzyl)-6-(D-ribitylimino)-5,6-dihydrouracil from 5-amino-6-(D-ribitylamino)uracil and L-tyrosine. This chain is 5-amino-6-(D-ribitylamino)uracil--L-tyrosine 4-hydroxyphenyl transferase 1, found in Methanosarcina acetivorans (strain ATCC 35395 / DSM 2834 / JCM 12185 / C2A).